A 151-amino-acid polypeptide reads, in one-letter code: Deoxyuridine 5'-triphosphate nucleotidohydrolase (151 aa).

Substrate is bound by residues 70–72 (RSG), Asn83, 87–89 (LID), and Met97.

The protein belongs to the dUTPase family. Mg(2+) is required as a cofactor.

It catalyses the reaction dUTP + H2O = dUMP + diphosphate + H(+). Its pathway is pyrimidine metabolism; dUMP biosynthesis; dUMP from dCTP (dUTP route): step 2/2. In terms of biological role, this enzyme is involved in nucleotide metabolism: it produces dUMP, the immediate precursor of thymidine nucleotides and it decreases the intracellular concentration of dUTP so that uracil cannot be incorporated into DNA. The chain is Deoxyuridine 5'-triphosphate nucleotidohydrolase from Pasteurella multocida (strain Pm70).